A 305-amino-acid polypeptide reads, in one-letter code: Homoserine O-succinyltransferase (305 aa).

Cys142 (acyl-thioester intermediate) is an active-site residue. Residues Lys163 and Ser192 each coordinate substrate. His235 (proton acceptor) is an active-site residue. The active site involves Glu237. Arg249 contributes to the substrate binding site.

The protein belongs to the MetA family.

It is found in the cytoplasm. It catalyses the reaction L-homoserine + succinyl-CoA = O-succinyl-L-homoserine + CoA. The protein operates within amino-acid biosynthesis; L-methionine biosynthesis via de novo pathway; O-succinyl-L-homoserine from L-homoserine: step 1/1. Functionally, transfers a succinyl group from succinyl-CoA to L-homoserine, forming succinyl-L-homoserine. The polypeptide is Homoserine O-succinyltransferase (Psychromonas ingrahamii (strain DSM 17664 / CCUG 51855 / 37)).